The primary structure comprises 237 residues: Uridylate kinase (237 aa).

12–15 is a binding site for ATP; it reads KLSG. Residue Gly-53 participates in UMP binding. ATP-binding residues include Gly-54 and Arg-58. Residues Asp-73 and 134-141 contribute to the UMP site; that span reads TGNPYFTT. ATP-binding residues include Thr-161, Tyr-167, and Asp-170.

Belongs to the UMP kinase family. Homohexamer.

The protein localises to the cytoplasm. The catalysed reaction is UMP + ATP = UDP + ADP. Its pathway is pyrimidine metabolism; CTP biosynthesis via de novo pathway; UDP from UMP (UMPK route): step 1/1. Inhibited by UTP. Its function is as follows. Catalyzes the reversible phosphorylation of UMP to UDP. This is Uridylate kinase from Rhizorhabdus wittichii (strain DSM 6014 / CCUG 31198 / JCM 15750 / NBRC 105917 / EY 4224 / RW1) (Sphingomonas wittichii).